The primary structure comprises 319 residues: Aspartate carbamoyltransferase catalytic subunit (319 aa).

The carbamoyl phosphate site is built by arginine 65 and threonine 66. Position 93 (lysine 93) interacts with L-aspartate. The carbamoyl phosphate site is built by arginine 115, histidine 149, and glutamine 152. L-aspartate-binding residues include arginine 182 and arginine 237. Carbamoyl phosphate is bound by residues glycine 278 and proline 279.

This sequence belongs to the aspartate/ornithine carbamoyltransferase superfamily. ATCase family. In terms of assembly, heterododecamer (2C3:3R2) of six catalytic PyrB chains organized as two trimers (C3), and six regulatory PyrI chains organized as three dimers (R2).

It catalyses the reaction carbamoyl phosphate + L-aspartate = N-carbamoyl-L-aspartate + phosphate + H(+). Its pathway is pyrimidine metabolism; UMP biosynthesis via de novo pathway; (S)-dihydroorotate from bicarbonate: step 2/3. Catalyzes the condensation of carbamoyl phosphate and aspartate to form carbamoyl aspartate and inorganic phosphate, the committed step in the de novo pyrimidine nucleotide biosynthesis pathway. This is Aspartate carbamoyltransferase catalytic subunit from Azoarcus sp. (strain BH72).